The sequence spans 221 residues: Large ribosomal subunit protein uL1 (221 aa).

It belongs to the universal ribosomal protein uL1 family. Part of the 50S ribosomal subunit.

Its function is as follows. Probably involved in E site tRNA release. Binds directly to 23S rRNA. Functionally, protein L1 is also a translational repressor protein, it controls the translation of its operon by binding to its mRNA. The sequence is that of Large ribosomal subunit protein uL1 from Sulfolobus acidocaldarius (strain ATCC 33909 / DSM 639 / JCM 8929 / NBRC 15157 / NCIMB 11770).